Consider the following 306-residue polypeptide: Pantothenate kinase (306 aa).

91–98 (GSVAVGKS) provides a ligand contact to ATP.

It belongs to the prokaryotic pantothenate kinase family.

It is found in the cytoplasm. The catalysed reaction is (R)-pantothenate + ATP = (R)-4'-phosphopantothenate + ADP + H(+). It participates in cofactor biosynthesis; coenzyme A biosynthesis; CoA from (R)-pantothenate: step 1/5. This Streptococcus pneumoniae (strain JJA) protein is Pantothenate kinase.